Here is a 1797-residue protein sequence, read N- to C-terminus: Non-reducing polyketide synthase nscA (1797 aa).

The tract at residues 17–256 is N-terminal acylcarrier protein transacylase domain (SAT); the sequence is SDDLKDLFRR…PLPVYDGLCH (240 aa). The Ketosynthase family 3 (KS3) domain occupies 392-825; sequence SSKLAIVGMA…GGNTTLLLED (434 aa). Catalysis depends on for beta-ketoacyl synthase activity residues Cys-565, His-700, and His-743. Residues 931 to 1251 form a malonyl-CoA:ACP transacylase (MAT) domain region; it reads FTGQGAYYSG…SLVTLHLAGL (321 aa). Residues 1318 to 1637 are product template (PT) domain; it reads TSLIHQITAE…RLLMDRFFSP (320 aa). An N-terminal hotdog fold region spans residues 1322–1458; sequence HQITAETIES…ATVRFEDPAA (137 aa). A PKS/mFAS DH domain is found at 1322–1632; sequence HQITAETIES…FRRVPRLLMD (311 aa). His-1354 (proton acceptor; for dehydratase activity) is an active-site residue. Residues 1482–1632 form a C-terminal hotdog fold region; the sequence is VEGKASRLSK…FRRVPRLLMD (151 aa). Residue Asp-1543 is the Proton donor; for dehydratase activity of the active site. A compositionally biased stretch (polar residues) spans 1663–1686; sequence SVPEISAPSPSIVVSDSTANNTLT. The interval 1663-1723 is disordered; that stretch reads SVPEISAPSP…PESESAEPLG (61 aa). A compositionally biased stretch (low complexity) spans 1698–1709; it reads SSSESSTPKESP. Residues 1720–1797 form the Carrier domain; it reads EPLGNTVSQC…EMTAWIEEYC (78 aa). Ser-1757 carries the O-(pantetheine 4'-phosphoryl)serine modification.

Pantetheine 4'-phosphate is required as a cofactor.

It functions in the pathway secondary metabolite biosynthesis. Its function is as follows. Non-reducing polyketide synthase; part of the gene cluster that mediates the biosynthesis of neosartoricin B, a prenylated anthracenone that probably exhibits T-cell antiproliferative activity, suggestive of a physiological role as an immunosuppressive agent. The non-reducing polyketide synthase nscA probably synthesizes and cyclizes the decaketide backbone. The hydrolase nscB then mediates the product release through hydrolysis followed by spontaneous decarboxylation. The prenyltransferase nscD catalyzes the addition of the dimethylallyl group to the aromatic C5. The FAD-dependent monooxygenase nscC is then responsible for the stereospecific hydroxylation at C2. Neosartoricin B can be converted into two additional compounds neosartoricins C and D. Neosartoricin C is a spirocyclic compound that is cyclized through the attack of C3 hydroxyl on C14, followed by dehydration. On the other hand, neosartoricin D is a further cyclized compound in which attack of C2 on C14 in neosartoricin C results in the formation of the acetal-containing dioxabicyclo-octanone ring. Both of these compounds are novel and possibly represent related metabolites of the gene cluster. This is Non-reducing polyketide synthase nscA from Arthroderma gypseum (strain ATCC MYA-4604 / CBS 118893) (Microsporum gypseum).